We begin with the raw amino-acid sequence, 177 residues long: Pyruvate synthase subunit PorC (177 aa).

As to quaternary structure, heterotetramer of one alpha, one beta, one delta and one gamma chain.

The catalysed reaction is 2 oxidized [2Fe-2S]-[ferredoxin] + pyruvate + CoA = 2 reduced [2Fe-2S]-[ferredoxin] + acetyl-CoA + CO2 + H(+). The protein is Pyruvate synthase subunit PorC (porC) of Methanothermobacter marburgensis (strain ATCC BAA-927 / DSM 2133 / JCM 14651 / NBRC 100331 / OCM 82 / Marburg) (Methanobacterium thermoautotrophicum).